A 61-amino-acid polypeptide reads, in one-letter code: Small ribosomal subunit protein uS14 (61 aa).

C24, C27, C40, and C43 together coordinate Zn(2+).

It belongs to the universal ribosomal protein uS14 family. Zinc-binding uS14 subfamily. In terms of assembly, part of the 30S ribosomal subunit. Contacts proteins S3 and S10. It depends on Zn(2+) as a cofactor.

In terms of biological role, binds 16S rRNA, required for the assembly of 30S particles and may also be responsible for determining the conformation of the 16S rRNA at the A site. In Borreliella afzelii (strain PKo) (Borrelia afzelii), this protein is Small ribosomal subunit protein uS14.